We begin with the raw amino-acid sequence, 84 residues long: Small ribosomal subunit protein bS20 (84 aa).

This sequence belongs to the bacterial ribosomal protein bS20 family.

Its function is as follows. Binds directly to 16S ribosomal RNA. This Azobacteroides pseudotrichonymphae genomovar. CFP2 protein is Small ribosomal subunit protein bS20.